A 273-amino-acid chain; its full sequence is Dermonecrotic toxin (273 aa).

Residues Glu-20 and Asp-22 each contribute to the Mg(2+) site. The Nucleophile role is filled by His-35. The cysteines at positions 39 and 45 are disulfide-linked. Residue Asp-79 participates in Mg(2+) binding.

It belongs to the arthropod phospholipase D family. Class I subfamily. Mg(2+) serves as cofactor. Expressed by the venom gland.

It is found in the secreted. It catalyses the reaction an N-(acyl)-sphingosylphosphocholine = an N-(acyl)-sphingosyl-1,3-cyclic phosphate + choline. The catalysed reaction is an N-(acyl)-sphingosylphosphoethanolamine = an N-(acyl)-sphingosyl-1,3-cyclic phosphate + ethanolamine. It carries out the reaction a 1-acyl-sn-glycero-3-phosphocholine = a 1-acyl-sn-glycero-2,3-cyclic phosphate + choline. The enzyme catalyses a 1-acyl-sn-glycero-3-phosphoethanolamine = a 1-acyl-sn-glycero-2,3-cyclic phosphate + ethanolamine. Functionally, dermonecrotic toxins cleave the phosphodiester linkage between the phosphate and headgroup of certain phospholipids (sphingolipid and lysolipid substrates), forming an alcohol (often choline) and a cyclic phosphate. This toxin acts on sphingomyelin (SM). It may also act on ceramide phosphoethanolamine (CPE), lysophosphatidylcholine (LPC) and lysophosphatidylethanolamine (LPE), but not on lysophosphatidylserine (LPS), and lysophosphatidylglycerol (LPG). It acts by transphosphatidylation, releasing exclusively cyclic phosphate products as second products. Induces dermonecrosis, hemolysis, increased vascular permeability, edema, inflammatory response, and platelet aggregation. In Loxosceles laeta (South American recluse spider), this protein is Dermonecrotic toxin.